Consider the following 218-residue polypeptide: Ras-related protein R-Ras (218 aa).

Residues 1-30 (MSSGAASGTGRGRPRGGGPGPRDPPPGETH) are disordered. A compositionally biased stretch (gly residues) spans 7-20 (SGTGRGRPRGGGPG). 36 to 44 (GGGGVGKSA) lines the GTP pocket. The Effector region motif lies at 58 to 66 (YDPTIEDSY). GTP is bound by residues 83–87 (DTAGQ), 142–145 (NKAD), and 172–174 (SAK). A Cysteine methyl ester modification is found at Cys-215. Cys-215 carries the S-geranylgeranyl cysteine lipid modification. The propeptide at 216-218 (VLL) is removed in mature form.

Belongs to the small GTPase superfamily. Ras family. Interacts with PLCE1. Interacts (active GTP-bound form preferentially) with RGS14. Interacts with OSBPL3. Interacts with ZDHHC19. S-palmitoylated by ZDHHC19, leading to increased association with membranes and with rafts/caveolae as well as enhanced cell viability.

It is found in the cell membrane. The enzyme catalyses GTP + H2O = GDP + phosphate + H(+). In terms of biological role, GTP-binding protein with GTPase activity, likely involved in the regulation of MAPK signaling pathway and thereby controlling multiple cellular processes. Regulates the organization of the actin cytoskeleton. With OSPBL3, modulates integrin beta-1 (ITGB1) activity. The protein is Ras-related protein R-Ras (Rras) of Rattus norvegicus (Rat).